Consider the following 1082-residue polypeptide: uncharacterized protein (1082 aa).

The PNPLA domain maps to 50 to 319 (TTMTGGVSLA…LDNRPIGVLF (270 aa)). A GXSXG motif is present at residues 120-124 (GTSAG). The active-site Nucleophile is S122. The Proton acceptor role is filled by D306. The DGA/G signature appears at 306-308 (DGG). 4 consecutive transmembrane segments (helical) span residues 959 to 979 (IARS…AAAI), 982 to 1002 (VTVF…LVVL), 1012 to 1032 (LFAL…TPVV), and 1057 to 1077 (WWHP…IAAA).

It localises to the cell membrane. This is an uncharacterized protein from Mycobacterium tuberculosis (strain ATCC 25618 / H37Rv).